Here is a 449-residue protein sequence, read N- to C-terminus: Uridine-cytidine kinase C (449 aa).

Position 58 to 65 (58 to 65 (GPSGAGKT)) interacts with ATP. The CYTH domain maps to 235 to 401 (NPIYILKSVK…QKSYIELYQD (167 aa)).

This sequence belongs to the uridine kinase family.

The catalysed reaction is uridine + ATP = UMP + ADP + H(+). It catalyses the reaction cytidine + ATP = CMP + ADP + H(+). The protein operates within pyrimidine metabolism; CTP biosynthesis via salvage pathway; CTP from cytidine: step 1/3. It participates in pyrimidine metabolism; UMP biosynthesis via salvage pathway; UMP from uridine: step 1/1. Catalyzes the conversion of uridine into uridine monophosphate and cytidine into cytidine monophosphate in the pyrimidine salvage pathway. This is Uridine-cytidine kinase C (udkC) from Dictyostelium discoideum (Social amoeba).